An 856-amino-acid polypeptide reads, in one-letter code: Beta-galactosidase 3 (856 aa).

Positions 1–31 (MREMGTGDSASRLILWFCLGFLILGVGFVQC) are cleaved as a signal peptide. The active-site Proton donor is glutamate 189. Catalysis depends on glutamate 258, which acts as the Nucleophile. An N-linked (GlcNAc...) asparagine glycan is attached at asparagine 468. One can recognise an SUEL-type lectin domain in the interval 760–846 (TFHRPKVHLK…KRLTVEAVCA (87 aa)).

The protein belongs to the glycosyl hydrolase 35 family. In terms of tissue distribution, ubiquitous.

Its subcellular location is the secreted. The protein resides in the extracellular space. The protein localises to the apoplast. The catalysed reaction is Hydrolysis of terminal non-reducing beta-D-galactose residues in beta-D-galactosides.. This chain is Beta-galactosidase 3 (BGAL3), found in Arabidopsis thaliana (Mouse-ear cress).